Reading from the N-terminus, the 198-residue chain is Transmembrane protein 17 (198 aa).

N-linked (GlcNAc...) asparagine glycosylation occurs at asparagine 13. 4 consecutive transmembrane segments (helical) span residues 47 to 67, 78 to 98, 110 to 130, and 142 to 162; these read LYFN…MLHL, FIVI…LYLG, LAGF…FLLL, and AIHS…FLTL.

The protein belongs to the TMEM17 family. As to quaternary structure, part of the tectonic-like complex (also named B9 complex).

Its subcellular location is the cell projection. The protein localises to the cilium membrane. Functionally, transmembrane component of the tectonic-like complex, a complex localized at the transition zone of primary cilia and acting as a barrier that prevents diffusion of transmembrane proteins between the cilia and plasma membranes. Required for ciliogenesis and sonic hedgehog/SHH signaling. The sequence is that of Transmembrane protein 17 (Tmem17) from Rattus norvegicus (Rat).